Consider the following 202-residue polypeptide: Response regulator RamR (202 aa).

The segment at 1-121 (MGEMVRIAVV…LITAVHTVAR (121 aa)) is response regulatory. Residues 135 to 200 (LKGAEMPLTT…DAIRIVQSAG (66 aa)) form the HTH luxR-type domain. A DNA-binding region (H-T-H motif) is located at residues 159-178 (IAEIAARLHLSRGTVRNYMA).

In terms of assembly, homodimer, in the absence of phosphorylation. In terms of processing, may be phosphorylated by an unknown kinase, probably on Asp-56.

A transcription factor required for aerial hyphae formation on rich medium. Activates transcription of ramC. Might be part of a two-component regulatory system. Binds the promoter of ramC. Non-phosphorylated protein cooperatively binds multiple sites in the ramC promoter. Has not been seen to autophosphorylate using the small molecule phosphodonors phosphoramidate, acetyl phosphate or carbamoyl phosphate. Upon low expression suppresses the bald (bld, no aerial hyphae) phenotype of citA but not bldJ mutants; higher expression also suppresses the bldJ mutant as well as several other bld mutations, inducing SapB production even on media where SapB is normally not produced. Expression of the ram locus (ramA, ramB and ramR) induces rapid aerial mycelium formation in S.lividans. Overexpression suppresses the no aerial hyphae phenotype of a chaplin-negative strain, probably by inducing expression of SapB. Overexpression of RamR show there are about 280 genes having at least a threefold increase or fourfold decrease in RNA abundance versus wild-type including gene cluster SCO4072-SCO4075. In Streptomyces coelicolor (strain ATCC BAA-471 / A3(2) / M145), this protein is Response regulator RamR.